We begin with the raw amino-acid sequence, 227 residues long: Phosphoribosylformylglycinamidine synthase subunit PurQ (227 aa).

Residues 3 to 225 (FAVIVFPGSN…LKYWRETYVV (223 aa)) form the Glutamine amidotransferase type-1 domain. Catalysis depends on Cys86, which acts as the Nucleophile. Active-site residues include His194 and Glu196.

Part of the FGAM synthase complex composed of 1 PurL, 1 PurQ and 2 PurS subunits.

The protein localises to the cytoplasm. It carries out the reaction N(2)-formyl-N(1)-(5-phospho-beta-D-ribosyl)glycinamide + L-glutamine + ATP + H2O = 2-formamido-N(1)-(5-O-phospho-beta-D-ribosyl)acetamidine + L-glutamate + ADP + phosphate + H(+). It catalyses the reaction L-glutamine + H2O = L-glutamate + NH4(+). The protein operates within purine metabolism; IMP biosynthesis via de novo pathway; 5-amino-1-(5-phospho-D-ribosyl)imidazole from N(2)-formyl-N(1)-(5-phospho-D-ribosyl)glycinamide: step 1/2. Functionally, part of the phosphoribosylformylglycinamidine synthase complex involved in the purines biosynthetic pathway. Catalyzes the ATP-dependent conversion of formylglycinamide ribonucleotide (FGAR) and glutamine to yield formylglycinamidine ribonucleotide (FGAM) and glutamate. The FGAM synthase complex is composed of three subunits. PurQ produces an ammonia molecule by converting glutamine to glutamate. PurL transfers the ammonia molecule to FGAR to form FGAM in an ATP-dependent manner. PurS interacts with PurQ and PurL and is thought to assist in the transfer of the ammonia molecule from PurQ to PurL. The polypeptide is Phosphoribosylformylglycinamidine synthase subunit PurQ (Bacillus cytotoxicus (strain DSM 22905 / CIP 110041 / 391-98 / NVH 391-98)).